Consider the following 890-residue polypeptide: Alanine--tRNA ligase (890 aa).

Zn(2+) is bound by residues His568, His572, Cys680, and His684.

Belongs to the class-II aminoacyl-tRNA synthetase family. Requires Zn(2+) as cofactor.

The protein resides in the cytoplasm. It carries out the reaction tRNA(Ala) + L-alanine + ATP = L-alanyl-tRNA(Ala) + AMP + diphosphate. Catalyzes the attachment of alanine to tRNA(Ala) in a two-step reaction: alanine is first activated by ATP to form Ala-AMP and then transferred to the acceptor end of tRNA(Ala). Also edits incorrectly charged Ser-tRNA(Ala) and Gly-tRNA(Ala) via its editing domain. The protein is Alanine--tRNA ligase of Psychrobacter cryohalolentis (strain ATCC BAA-1226 / DSM 17306 / VKM B-2378 / K5).